Consider the following 769-residue polypeptide: MFNLKVKDLNGSARGLTQAFAIGELKNQLSVGALQLPLQFTRTFSASMTSELLWEVGKGNIDPVMYARLFFQYAQAGGALSVDELVNQFTEYHQSTACNPEIWRKLTAYITGSSNRAIKADAVGKVPPTAILEQLRTLAPSEHELFHHITTDFVCHVLSPLGFILPDAAYVYRVGRTATYPNFYALVDCVRASDLRRMLTALSSVDSKMLQATFKAKGALAPALISQHLANAATTAFERSRGNFDANAVVSSVLTILGRLWSPSTPKELDPSARLRNTNGIDQLRSNLALFIAYQDMVKQRGRAEVIFSDEELSSTIIPWFIEAMSEVSPFKLRPINETTSYIGQTSAIDHMGQPSHVVVYEDWQFAKEITAFTPVKLANNSNQRFLDVEPGISDRMSATLAPIGNTFAVSAFVKNRTAVYEAVSQRGTVNSNGAEMTLGFPSVVERDYALDRDPMVAIAALRTGIVDESLEARASNDLKRSMFNYYAAVMHYAVAHNPEVVVSEHQGVAAEQGSLYLVWNVRTELRIPVGYNAIEGGSIRTPEPLEAIAYNKPIQPSEVLQAKVLDLANHTTSIHIWPWHEASTEFAYEDAYSVTIRNKRYTAEVKEFELLGLGQRRERVRILKPTVAHAIIQMWYSWFVEDDRTLAAARRTSRDDAEKLAIDGRRMQNAVTLLRKIEMIGTTGIGASAVHLAQSRIVDQMAGRGLIDDSSDLHVGINRHRIRIWAGLAVLQMMGLLSRSEAEALTKVLGDSNALGMVVATTDIDPSL.

Homodimer. Associates with the polymerase complex.

The protein localises to the virion. In terms of biological role, P1 is the major inner capsid (core) protein of the polyhedral procapsid, which is responsible for genomic replication and transcription. Forms a dodecahedral shell from 60 asymmetric dimers. Binds to RNA and may be involved in genomic packaging. The protein is Major inner protein P1 (P1) of Pseudomonas phage phi6 (Bacteriophage phi-6).